Here is a 574-residue protein sequence, read N- to C-terminus: Sentrin-specific protease 3 (574 aa).

Residues 1–125 form a disordered region; the sequence is MKETIQGTGS…PTHRKTCSQR (125 aa). Phosphoserine occurs at positions 54, 73, and 75. Residues 74 to 93 are compositionally biased toward acidic residues; that stretch reads ASEEEEEEEEEEDEDEEEEV. Over residues 112–125 the composition is skewed to basic residues; that stretch reads RPSRPTHRKTCSQR. 2 consecutive short sequence motifs (nuclear localization signal) follow at residues 125–128 and 153–159; these read RRRR and RHRGRRR. Residues 161 to 181 form a disordered region; sequence LAHPKNHLSPQQGGATPQVPS. Ser-169 carries the phosphoserine modification. The residue at position 176 (Thr-176) is a Phosphothreonine. 4 positions are modified to phosphoserine: Ser-181, Ser-188, Ser-212, and Ser-232. The tract at residues 386 to 543 is protease; sequence HVLTMDDLGT…AFVLQYCKHL (158 aa). Active-site residues include His-465 and Asp-482. Cys-532 functions as the Nucleophile in the catalytic mechanism.

This sequence belongs to the peptidase C48 family. As to quaternary structure, component of some MLL1/MLL complex, at least composed of the core components KMT2A/MLL1, ASH2L, HCFC1/HCF1, WDR5 and RBBP5, as well as the facultative components BACC1, CHD8, E2F6, HSP70, INO80C, KANSL1, LAS1L, MAX, MCRS1, MGA, MYST1/MOF, PELP1, PHF20, PRP31, RING2, RUVB1/TIP49A, RUVB2/TIP49B, SENP3, TAF1, TAF4, TAF6, TAF7, TAF9 and TEX10. Interacts with EP300, NPM1 and CDCA8. Component of the 5FMC complex, at least composed of PELP1, LAS1L, TEX10, WDR18 and SENP3; the complex interacts with methylated CHTOP and ZNF148. Interacts with NOL9. Interacts with CCAR2.

It localises to the nucleus. The protein resides in the nucleolus. Its subcellular location is the nucleoplasm. It is found in the cytoplasm. With respect to regulation, on oxidative stress, SENP3 degradation is blocked by inhibition of its ubiquitination, which stabilizes it as it accumulates in the nucleoplasm. Its function is as follows. Protease that releases SUMO2 and SUMO3 monomers from sumoylated substrates, but has only weak activity against SUMO1 conjugates. Deconjugates SUMO2 from MEF2D, which increases its transcriptional activation capability. Deconjugates SUMO2 and SUMO3 from CDCA8. Redox sensor that, when redistributed into nucleoplasm, can act as an effector to enhance HIF1A transcriptional activity by desumoylating EP300. Required for rRNA processing through deconjugation of SUMO2 and SUMO3 from nucleophosmin, NPM1. Plays a role in the regulation of sumoylation status of ZNF148. Functions as a component of the Five Friends of Methylated CHTOP (5FMC) complex; the 5FMC complex is recruited to ZNF148 by methylated CHTOP, leading to desumoylation of ZNF148 and subsequent transactivation of ZNF148 target genes. Deconjugates SUMO2 from KAT5. Catalyzes desumoylation of MRE11. The polypeptide is Sentrin-specific protease 3 (Homo sapiens (Human)).